Here is a 167-residue protein sequence, read N- to C-terminus: Small ribosomal subunit protein uS5 (167 aa).

Residues 12–75 (LREKLITINR…ERARGGMRTV (64 aa)) form the S5 DRBM domain.

The protein belongs to the universal ribosomal protein uS5 family. In terms of assembly, part of the 30S ribosomal subunit. Contacts proteins S4 and S8.

Its function is as follows. With S4 and S12 plays an important role in translational accuracy. Located at the back of the 30S subunit body where it stabilizes the conformation of the head with respect to the body. The protein is Small ribosomal subunit protein uS5 of Halorhodospira halophila (strain DSM 244 / SL1) (Ectothiorhodospira halophila (strain DSM 244 / SL1)).